The primary structure comprises 448 residues: tRNA-2-methylthio-N(6)-dimethylallyladenosine synthase (448 aa).

In terms of domain architecture, MTTase N-terminal spans 3–120 (KKLFIKTHGC…LPTMLDSRQG (118 aa)). [4Fe-4S] cluster-binding residues include cysteine 12, cysteine 49, cysteine 83, cysteine 158, cysteine 162, and cysteine 165. The Radical SAM core domain maps to 144–376 (TSDGATAFVS…QERLNQQTMQ (233 aa)). In terms of domain architecture, TRAM spans 379 to 444 (RRMVGNTERI…PNSLRGDLAS (66 aa)).

This sequence belongs to the methylthiotransferase family. MiaB subfamily. As to quaternary structure, monomer. [4Fe-4S] cluster serves as cofactor.

It localises to the cytoplasm. It carries out the reaction N(6)-dimethylallyladenosine(37) in tRNA + (sulfur carrier)-SH + AH2 + 2 S-adenosyl-L-methionine = 2-methylsulfanyl-N(6)-dimethylallyladenosine(37) in tRNA + (sulfur carrier)-H + 5'-deoxyadenosine + L-methionine + A + S-adenosyl-L-homocysteine + 2 H(+). Functionally, catalyzes the methylthiolation of N6-(dimethylallyl)adenosine (i(6)A), leading to the formation of 2-methylthio-N6-(dimethylallyl)adenosine (ms(2)i(6)A) at position 37 in tRNAs that read codons beginning with uridine. The chain is tRNA-2-methylthio-N(6)-dimethylallyladenosine synthase from Chromohalobacter salexigens (strain ATCC BAA-138 / DSM 3043 / CIP 106854 / NCIMB 13768 / 1H11).